The following is a 317-amino-acid chain: Ribosomal protein L11 methyltransferase (317 aa).

S-adenosyl-L-methionine-binding residues include threonine 158, glycine 179, aspartate 201, and asparagine 244.

It belongs to the methyltransferase superfamily. PrmA family.

The protein localises to the cytoplasm. The catalysed reaction is L-lysyl-[protein] + 3 S-adenosyl-L-methionine = N(6),N(6),N(6)-trimethyl-L-lysyl-[protein] + 3 S-adenosyl-L-homocysteine + 3 H(+). Functionally, methylates ribosomal protein L11. In Streptococcus pyogenes serotype M18 (strain MGAS8232), this protein is Ribosomal protein L11 methyltransferase.